We begin with the raw amino-acid sequence, 185 residues long: Prorelaxin 1 (185 aa).

The N-terminal stretch at 1–22 (MSSRFLLQLLGFWLLLSQPCRT) is a signal peptide. Cystine bridges form between Cys36–Cys171, Cys48–Cys185, and Cys170–Cys175. A propeptide spans 58 to 156 (SQEEPALLAR…LKYLQSDTHS (99 aa)) (connecting peptide). The segment at 135–161 (RLGEAEDGSPPGLKYLQSDTHSRKKRE) is disordered.

It belongs to the insulin family. In terms of assembly, heterodimer of a B chain and an A chain linked by two disulfide bonds.

The protein resides in the secreted. Its function is as follows. Relaxin is an ovarian hormone that acts with estrogen to produce dilatation of the birth canal in many mammals. In Mus musculus (Mouse), this protein is Prorelaxin 1 (Rln1).